The following is a 388-amino-acid chain: Chorismate synthase (388 aa).

Residues Arg-39 and Arg-45 each contribute to the NADP(+) site. Residues 95 to 118 (EKNEKSRRVSRPRPGHADLVGGMK) form a disordered region. FMN-binding positions include 130-132 (RSS), 251-252 (NA), Gly-296, 311-315 (KPIPT), and Arg-337.

The protein belongs to the chorismate synthase family. In terms of assembly, homotetramer. The cofactor is FMNH2.

It catalyses the reaction 5-O-(1-carboxyvinyl)-3-phosphoshikimate = chorismate + phosphate. Its pathway is metabolic intermediate biosynthesis; chorismate biosynthesis; chorismate from D-erythrose 4-phosphate and phosphoenolpyruvate: step 7/7. Functionally, catalyzes the anti-1,4-elimination of the C-3 phosphate and the C-6 proR hydrogen from 5-enolpyruvylshikimate-3-phosphate (EPSP) to yield chorismate, which is the branch point compound that serves as the starting substrate for the three terminal pathways of aromatic amino acid biosynthesis. This reaction introduces a second double bond into the aromatic ring system. The polypeptide is Chorismate synthase (Listeria welshimeri serovar 6b (strain ATCC 35897 / DSM 20650 / CCUG 15529 / CIP 8149 / NCTC 11857 / SLCC 5334 / V8)).